Here is a 102-residue protein sequence, read N- to C-terminus: uncharacterized protein (102 aa).

This is an uncharacterized protein from Bacillus subtilis (strain 168).